The chain runs to 425 residues: GTPase Obg (425 aa).

The 158-residue stretch at 1–158 (MFIDKAKIYV…REIILELKLL (158 aa)) folds into the Obg domain. One can recognise an OBG-type G domain in the interval 159–331 (ADVGLVGFPN…LMAEVSKTLA (173 aa)). GTP is bound by residues 165 to 172 (GFPNVGKS), 190 to 194 (FTTLK), 212 to 215 (DIPG), 282 to 285 (NKSD), and 312 to 314 (SAA). 2 residues coordinate Mg(2+): Ser-172 and Thr-192. One can recognise an OCT domain in the interval 345–425 (LFIPEEKRFT…LNDFEFEFVI (81 aa)).

The protein belongs to the TRAFAC class OBG-HflX-like GTPase superfamily. OBG GTPase family. Monomer. Requires Mg(2+) as cofactor.

Its subcellular location is the cytoplasm. Its function is as follows. An essential GTPase which binds GTP, GDP and possibly (p)ppGpp with moderate affinity, with high nucleotide exchange rates and a fairly low GTP hydrolysis rate. Plays a role in control of the cell cycle, stress response, ribosome biogenesis and in those bacteria that undergo differentiation, in morphogenesis control. The chain is GTPase Obg from Clostridium tetani (strain Massachusetts / E88).